The sequence spans 393 residues: Large ribosomal subunit protein uL2m (393 aa).

The transit peptide at 1–43 (MLVLGSLRSALSCSSTASLISKRNPCYPYGILCRTLSQSVKLW) directs the protein to the mitochondrion. The disordered stretch occupies residues 337–393 (AMNKCDHPHGGGRGKSKSNKLSMSPWGQLAKGYKTRRGKNQNRMKVKDRPRGKDARL). The segment covering 369–380 (YKTRRGKNQNRM) has biased composition (basic residues). Residues 381–393 (KVKDRPRGKDARL) are compositionally biased toward basic and acidic residues.

Belongs to the universal ribosomal protein uL2 family. Component of the mitochondrial large ribosomal subunit (mt-LSU). Mature yeast 74S mitochondrial ribosomes consist of a small (37S) and a large (54S) subunit. The 37S small subunit contains a 15S ribosomal RNA (15S mt-rRNA) and 34 different proteins. The 54S large subunit contains a 21S rRNA (21S mt-rRNA) and 46 different proteins. uL2m has a Na/K ligand binding site.

The protein localises to the mitochondrion. Functionally, component of the mitochondrial ribosome (mitoribosome), a dedicated translation machinery responsible for the synthesis of mitochondrial genome-encoded proteins, including at least some of the essential transmembrane subunits of the mitochondrial respiratory chain. The mitoribosomes are attached to the mitochondrial inner membrane and translation products are cotranslationally integrated into the membrane. This chain is Large ribosomal subunit protein uL2m (RML2), found in Saccharomyces cerevisiae (strain ATCC 204508 / S288c) (Baker's yeast).